Reading from the N-terminus, the 215-residue chain is Probable nicotinate-nucleotide adenylyltransferase (215 aa).

This sequence belongs to the NadD family.

The catalysed reaction is nicotinate beta-D-ribonucleotide + ATP + H(+) = deamido-NAD(+) + diphosphate. It participates in cofactor biosynthesis; NAD(+) biosynthesis; deamido-NAD(+) from nicotinate D-ribonucleotide: step 1/1. Functionally, catalyzes the reversible adenylation of nicotinate mononucleotide (NaMN) to nicotinic acid adenine dinucleotide (NaAD). In Gluconacetobacter diazotrophicus (strain ATCC 49037 / DSM 5601 / CCUG 37298 / CIP 103539 / LMG 7603 / PAl5), this protein is Probable nicotinate-nucleotide adenylyltransferase.